Reading from the N-terminus, the 66-residue chain is uncharacterized protein (66 aa).

The region spanning 5-59 (VKELRARFGYSQEKLGETVGVTRQTVAAIEKGDYVPSLLLALKICKAFSMKMEDV) is the HTH cro/C1-type domain. The segment at residues 16–35 (QEKLGETVGVTRQTVAAIEK) is a DNA-binding region (H-T-H motif).

This is an uncharacterized protein from Bacillus subtilis (strain 168).